A 385-amino-acid chain; its full sequence is Glucose-fructose oxidoreductase domain-containing protein 2 (385 aa).

An N-terminal signal peptide occupies residues 1 to 25; that stretch reads MKMLPGVGVFGTGSSARVLVPLLRA.

This sequence belongs to the Gfo/Idh/MocA family.

Its subcellular location is the secreted. It is found in the extracellular space. It localises to the extracellular matrix. Functionally, promotes matrix assembly. This is Glucose-fructose oxidoreductase domain-containing protein 2 (GFOD2) from Bos taurus (Bovine).